The sequence spans 287 residues: Probable aquaporin PIP1-4 (287 aa).

Residue methionine 1 is modified to N-acetylmethionine. The disordered stretch occupies residues 1 to 36 (MEGKEEDVRVGANKFPERQPIGTSAQSTDKDYKEPP). Residues 1–55 (MEGKEEDVRVGANKFPERQPIGTSAQSTDKDYKEPPPAPLFEPGELSSWSFYRAG) lie on the Cytoplasmic side of the membrane. A helical membrane pass occupies residues 56–76 (IAEFIATFLFLYITVLTVMGV). Topologically, residues 77–92 (KRAPNMCASVGIQGIA) are extracellular. A helical membrane pass occupies residues 93-113 (WAFGGMIFALVYCTAGISGGH). Residues 114-133 (INPAVTFGLFLARKLSLTRA) lie on the Cytoplasmic side of the membrane. An NPA 1 motif is present at residues 115–117 (NPA). The chain crosses the membrane as a helical span at residues 134–154 (VFYMIMQCLGAICGAGVVKGF). Topologically, residues 155–175 (QPTPYQTLGGGANTVAHGYTK) are extracellular. Residues 176–196 (GSGLGAEIIGTFVLVYTVFSA) form a helical membrane-spanning segment. The Cytoplasmic portion of the chain corresponds to 197–209 (TDAKRSARDSHVP). A helical membrane pass occupies residues 210 to 230 (ILAPLPIGFAVFLVHLATIPI). At 231 to 257 (TGTGINPARSLGAAIIYNKDHSWDDHW) the chain is on the extracellular side. An NPA 2 motif is present at residues 236–238 (NPA). The helical transmembrane segment at 258–278 (IFWVGPFIGAALAALYHQIVI) threads the bilayer. At 279–287 (RAIPFKSKS) the chain is on the cytoplasmic side. Serine 285 is subject to Phosphoserine.

It belongs to the MIP/aquaporin (TC 1.A.8) family. PIP (TC 1.A.8.11) subfamily. In terms of tissue distribution, predominantly expressed in roots and green siliques. Also expressed above ground and in flower buds.

It localises to the cell membrane. Its function is as follows. Aquaporins facilitate the transport of water and small neutral solutes across cell membranes. The sequence is that of Probable aquaporin PIP1-4 (PIP1.4) from Arabidopsis thaliana (Mouse-ear cress).